Consider the following 275-residue polypeptide: Sororin-B (275 aa).

Residues 1–16 show a composition bias toward basic and acidic residues; that stretch reads MSERKKRGSSDADSRR. 2 disordered regions span residues 1 to 42 and 63 to 117; these read MSER…PAPI and NTGS…EIDV. 2 stretches are compositionally biased toward polar residues: residues 63-76 and 93-112; these read NTGS…SNVT and NAFS…QSSA. The short motif at 91 to 93 is the KEN box element; that stretch reads KEN. The FGF motif signature appears at 186–188; it reads FGF. The tract at residues 253 to 275 is C-terminal Sororin domain; the sequence is VDEWAAIMNAEFDEAEKFDLTVE.

It belongs to the sororin family. As to quaternary structure, interacts with the APC/C complex. Interacts with the chromatin-bound cohesin complex; the interaction is indirect, occurs after DNA replication and requires acetylation of the cohesin component smc3. Interacts (via the FGF motif) with pds5a and pds5b; the interaction is direct and prevents the interaction of pds5a with wapl. Ubiquitinated by the APC/C complex in G1, leading to its degradation.

The protein localises to the nucleus. Its subcellular location is the chromosome. It is found in the cytoplasm. Its function is as follows. Regulator of sister chromatid cohesion in mitosis stabilizing cohesin complex association with chromatin. May antagonize the action of wapl which stimulates cohesin dissociation from chromatin. Cohesion ensures that chromosome partitioning is accurate in both meiotic and mitotic cells and plays an important role in DNA repair. Required for efficient DNA double-stranded break repair. This Xenopus laevis (African clawed frog) protein is Sororin-B (cdca5-b).